The primary structure comprises 396 residues: MARRLFTSESVTEGHPDKIADQISDAVLDAIFEKDPLARVACETLVTTGLVLVAGEITTDCYVDIPRVARETIREIGYTRAKYGFDCDTCAVITSIDEQSSDIAQGVDRALEVRERYGNEDELEATGAGDQGMMFGYATTETPELMPLPISLAHRLARRLAEVRKSRLLPYLRPDGKTQVTVEYENGRPVRVDTIVISTQHHPRVTLDEIRSGVLEHVVKPVVPPEFLDGSTRFFVNPTGRFVIGGPQGDTGLTGRKIIVDTYGGMARHGGGSFSGKDPTKVDRSASYAARYVAKNIVAAGLAEKCEFQVAYAIGVAHPVSMMVDTFGTGRVDEQTLVKLVKEHFDLRPAAIIKELDLRRPIYRQVSVYGHFGRNDLDLPWERTDKAEALRRGAGL.

Histidine 15 is a binding site for ATP. Residue aspartate 17 coordinates Mg(2+). Glutamate 43 is a K(+) binding site. 2 residues coordinate L-methionine: glutamate 56 and glutamine 99. The interval 99–109 is flexible loop; that stretch reads QSSDIAQGVDR. ATP contacts are provided by residues 175 to 177, 241 to 242, aspartate 250, 256 to 257, serine 273, and lysine 277; these read DGK, RF, and RK. Residue aspartate 250 coordinates L-methionine. Position 281 (lysine 281) interacts with L-methionine.

Belongs to the AdoMet synthase family. In terms of assembly, homotetramer; dimer of dimers. It depends on Mg(2+) as a cofactor. Requires K(+) as cofactor.

It is found in the cytoplasm. It carries out the reaction L-methionine + ATP + H2O = S-adenosyl-L-methionine + phosphate + diphosphate. The protein operates within amino-acid biosynthesis; S-adenosyl-L-methionine biosynthesis; S-adenosyl-L-methionine from L-methionine: step 1/1. In terms of biological role, catalyzes the formation of S-adenosylmethionine (AdoMet) from methionine and ATP. The overall synthetic reaction is composed of two sequential steps, AdoMet formation and the subsequent tripolyphosphate hydrolysis which occurs prior to release of AdoMet from the enzyme. In Pelotomaculum thermopropionicum (strain DSM 13744 / JCM 10971 / SI), this protein is S-adenosylmethionine synthase.